Consider the following 89-residue polypeptide: Heat shock protein 30A (89 aa).

Composition is skewed to basic and acidic residues over residues methionine 1–arginine 11 and leucine 19–glutamate 39. The tract at residues methionine 1 to leucine 55 is disordered. Residues serine 35–glutamate 89 enclose the sHSP domain.

The protein belongs to the small heat shock protein (HSP20) family.

The chain is Heat shock protein 30A (hsp30a) from Xenopus laevis (African clawed frog).